A 257-amino-acid polypeptide reads, in one-letter code: Ribonuclease PH (257 aa).

Phosphate-binding positions include Arg87 and 125 to 127 (GTR).

This sequence belongs to the RNase PH family. Homohexameric ring arranged as a trimer of dimers.

The enzyme catalyses tRNA(n+1) + phosphate = tRNA(n) + a ribonucleoside 5'-diphosphate. Functionally, phosphorolytic 3'-5' exoribonuclease that plays an important role in tRNA 3'-end maturation. Removes nucleotide residues following the 3'-CCA terminus of tRNAs; can also add nucleotides to the ends of RNA molecules by using nucleoside diphosphates as substrates, but this may not be physiologically important. Probably plays a role in initiation of 16S rRNA degradation (leading to ribosome degradation) during starvation. The polypeptide is Ribonuclease PH (Geobacillus kaustophilus (strain HTA426)).